The primary structure comprises 436 residues: Septin-7 (436 aa).

S2 is subject to N-acetylserine. At Y29 the chain carries Phosphotyrosine. The 270-residue stretch at 46–315 folds into the Septin-type G domain; that stretch reads RGFEFTLMVV…ENYRSRKLAA (270 aa). Residues 46 to 316 form an interaction with SEPTIN12 region; that stretch reads RGFEFTLMVV…NYRSRKLAAV (271 aa). The segment at 56–63 is G1 motif; it reads GESGLGKS. 56–63 contacts GTP; sequence GESGLGKS. At S76 the chain carries Phosphoserine. GTP is bound by residues T89, G115, and 194 to 202; that span reads KADTLTPEE. The G3 motif stretch occupies residues 112–115; the sequence is DTPG. The segment at 193–196 is G4 motif; it reads AKAD. T227 carries the phosphothreonine modification. GTP is bound by residues G249 and R264. Residues 331–436 are a coiled coil; that stretch reads TKSPLAQMEE…EKNKKKGKIF (106 aa). S333 bears the Phosphoserine mark. K372 is modified (N6-acetyllysine). Positions 377–409 are enriched in basic and acidic residues; sequence ELQRRHEQMKKNLEAQHKELEEKRRQFEEEKAN. Residues 377-436 are disordered; the sequence is ELQRRHEQMKKNLEAQHKELEEKRRQFEEEKANWEAQQRILEQQNSSRTLEKNKKKGKIF. Phosphoserine is present on S423. T425 carries the post-translational modification Phosphothreonine.

This sequence belongs to the TRAFAC class TrmE-Era-EngA-EngB-Septin-like GTPase superfamily. Septin GTPase family. In terms of assembly, septins polymerize into heterooligomeric protein complexes that form filaments, and associate with cellular membranes, actin filaments and microtubules. GTPase activity is required for filament formation. Filaments are assembled from asymmetrical heterotrimers, composed of SEPTIN2, SEPTIN6 and SEPTIN7 that associate head-to-head to form a hexameric unit. Within the trimer, directly interacts with SEPTIN6, while interaction with SEPTIN2 seems indirect. In the absence of SEPTIN6, forms homodimers. Interacts directly with CENPE and links CENPE to septin filaments composed of SEPTIN2, SEPTIN6 and SEPTIN7. Interacts with SEPTIN5. Component of a septin core octameric complex consisting of SEPTIN12, SEPTIN7, SEPTIN6 and SEPTIN2 or SEPTIN4 in the order 12-7-6-2-2-6-7-12 or 12-7-6-4-4-6-7-12 and located in the sperm annulus; the SEPTIN12:SEPTIN7 association is mediated by the respective GTP-binding domains. Interacts with SEPTIN2, SEPTIN7, SEPTIN8, SEPTIN9 and SEPTIN11.

Its subcellular location is the cytoplasm. It is found in the chromosome. The protein resides in the centromere. The protein localises to the kinetochore. It localises to the cytoskeleton. Its subcellular location is the spindle. It is found in the cleavage furrow. The protein resides in the midbody. The protein localises to the cilium axoneme. It localises to the cell projection. Its subcellular location is the cilium. It is found in the flagellum. Its function is as follows. Filament-forming cytoskeletal GTPase. Required for normal organization of the actin cytoskeleton. Required for normal progress through mitosis. Involved in cytokinesis. Required for normal association of CENPE with the kinetochore. Plays a role in ciliogenesis and collective cell movements. Forms a filamentous structure with SEPTIN12, SEPTIN6, SEPTIN2 and probably SEPTIN4 at the sperm annulus which is required for the structural integrity and motility of the sperm tail during postmeiotic differentiation. This is Septin-7 from Rattus norvegicus (Rat).